Here is a 1150-residue protein sequence, read N- to C-terminus: Rho-type GTPase-activating protein 1 (1150 aa).

The span at Met-1–Gly-10 shows a compositional bias: basic and acidic residues. The disordered stretch occupies residues Met-1 to Gln-78. Positions Thr-40 to Leu-62 are enriched in polar residues. LIM zinc-binding domains lie at Lys-114–Asp-177, Leu-178–Ala-238, and Asp-483–Val-546. The segment at Ser-586–Ser-683 is disordered. A compositionally biased stretch (polar residues) spans Glu-598–Asp-617. A compositionally biased stretch (low complexity) spans Ser-642–Ser-655. Ser-690 is modified (phosphoserine). A disordered region spans residues Ala-726–Lys-759. The 202-residue stretch at Val-837–Cys-1038 folds into the Rho-GAP domain. Disordered regions lie at residues Leu-1078 to Ile-1097 and Leu-1104 to Ser-1150. Basic residues predominate over residues Ala-1088–Ile-1097. Residues Leu-1104 to Ala-1134 show a composition bias toward polar residues.

Its subcellular location is the cell tip. It localises to the nucleus. Functionally, GTPase-activating protein for Rho1. Involved in the F-actin patch localization, cell morphogenesis, regulation of septation, and cell wall synthesis. This Schizosaccharomyces pombe (strain 972 / ATCC 24843) (Fission yeast) protein is Rho-type GTPase-activating protein 1 (rga1).